Reading from the N-terminus, the 359-residue chain is Biotin synthase (359 aa).

The segment at M1–A22 is disordered. In terms of domain architecture, Radical SAM core spans N58–R285. Positions 73, 77, and 80 each coordinate [4Fe-4S] cluster. C117, C148, C208, and R280 together coordinate [2Fe-2S] cluster.

This sequence belongs to the radical SAM superfamily. Biotin synthase family. As to quaternary structure, homodimer. Requires [4Fe-4S] cluster as cofactor. It depends on [2Fe-2S] cluster as a cofactor.

It carries out the reaction (4R,5S)-dethiobiotin + (sulfur carrier)-SH + 2 reduced [2Fe-2S]-[ferredoxin] + 2 S-adenosyl-L-methionine = (sulfur carrier)-H + biotin + 2 5'-deoxyadenosine + 2 L-methionine + 2 oxidized [2Fe-2S]-[ferredoxin]. Its pathway is cofactor biosynthesis; biotin biosynthesis; biotin from 7,8-diaminononanoate: step 2/2. In terms of biological role, catalyzes the conversion of dethiobiotin (DTB) to biotin by the insertion of a sulfur atom into dethiobiotin via a radical-based mechanism. In Ralstonia pickettii (strain 12J), this protein is Biotin synthase.